A 529-amino-acid polypeptide reads, in one-letter code: Structure-specific endonuclease subunit SLX1 homolog 1 (529 aa).

Positions 4–89 constitute a GIY-YIG domain; the sequence is RFHCVYLLTS…PTKSTRLKTQ (86 aa). The SLX1-type zinc-finger motif lies at 231-364; it reads CALCSLPLRS…PCQPCPCPLC (134 aa). 3 disordered regions span residues 275-305, 409-437, and 470-501; these read VTMG…MDAH, NSSL…YCGD, and SVSL…RMTD. Positions 282–297 are enriched in basic and acidic residues; sequence RNERSGEYSNKIKDDS.

This sequence belongs to the SLX1 family. Forms a heterodimer with a member of the SLX4 family. Requires a divalent metal cation as cofactor.

It localises to the nucleus. Its function is as follows. Catalytic subunit of a heterodimeric structure-specific endonuclease that resolves DNA secondary structures generated during DNA repair and recombination. Has endonuclease activity towards branched DNA substrates, introducing single-strand cuts in duplex DNA close to junctions with ss-DNA. The sequence is that of Structure-specific endonuclease subunit SLX1 homolog 1 from Trypanosoma cruzi (strain CL Brener).